The chain runs to 100 residues: Urease subunit gamma (100 aa).

It belongs to the urease gamma subunit family. As to quaternary structure, heterotrimer of UreA (gamma), UreB (beta) and UreC (alpha) subunits. Three heterotrimers associate to form the active enzyme.

It is found in the cytoplasm. The enzyme catalyses urea + 2 H2O + H(+) = hydrogencarbonate + 2 NH4(+). It functions in the pathway nitrogen metabolism; urea degradation; CO(2) and NH(3) from urea (urease route): step 1/1. The sequence is that of Urease subunit gamma from Nitrosococcus oceani (strain ATCC 19707 / BCRC 17464 / JCM 30415 / NCIMB 11848 / C-107).